We begin with the raw amino-acid sequence, 267 residues long: Aliphatic sulfonates import ATP-binding protein SsuB 1 (267 aa).

The 215-residue stretch at 35–249 folds into the ABC transporter domain; it reads VRVRGLRRVF…RRADPAFDRL (215 aa). 67–74 is a binding site for ATP; sequence GRSGSGKS.

It belongs to the ABC transporter superfamily. Aliphatic sulfonates importer (TC 3.A.1.17.2) family. As to quaternary structure, the complex is composed of two ATP-binding proteins (SsuB), two transmembrane proteins (SsuC) and a solute-binding protein (SsuA).

Its subcellular location is the cell membrane. It carries out the reaction ATP + H2O + aliphatic sulfonate-[sulfonate-binding protein]Side 1 = ADP + phosphate + aliphatic sulfonateSide 2 + [sulfonate-binding protein]Side 1.. Part of the ABC transporter complex SsuABC involved in aliphatic sulfonates import. Responsible for energy coupling to the transport system. The protein is Aliphatic sulfonates import ATP-binding protein SsuB 1 of Frankia alni (strain DSM 45986 / CECT 9034 / ACN14a).